Here is a 514-residue protein sequence, read N- to C-terminus: MQQLNPSEISEIIKGRIDNLDVSSQARNEGTVVSVSDGIVRIHGLADVMYGEMIEFPGGVYGMALNLEQDSVGAVVLGAYDTLAEGMSAKCTGRILEVPVGKELLGRVVDALGNPIDGKGPLGNTETDAVEKVAPGVIWRKSVDQPVQTGYKSVDAMIPVGRGQRELIIGDRQIGKTAMAIDAIINQKDSGIFCVYVAVGQKRSTVANIVRKLEENGALANTIVVVASASESAALQFLAPYAGCTMGEFFRDRGEDALIVYDDLSKQAVAYRQISLLLRRPPGREAYPGDVFYLHSRLLERASRVSEEYVEKFTNGAVTGKTGSLTALPIIETQAGDVSAFVPTNVISITDGQIFLESAMFNSGIRPAVNAGVSVSRVGGAAQTKIIKKLSGGIRTALAQYRELAAFAQFASDLDEATRKQLEHGQRVTELMKQKQYAPMSIADMALSLYAAERGFLTDVEIAKIGSFEQALIAYFNRDHAELMAKINVKGDFNDEIDAGIKAGIEKFKATQTW.

Gly-170 to Thr-177 is a binding site for ATP.

This sequence belongs to the ATPase alpha/beta chains family. In terms of assembly, F-type ATPases have 2 components, CF(1) - the catalytic core - and CF(0) - the membrane proton channel. CF(1) has five subunits: alpha(3), beta(3), gamma(1), delta(1), epsilon(1). CF(0) has three main subunits: a(1), b(2) and c(9-12). The alpha and beta chains form an alternating ring which encloses part of the gamma chain. CF(1) is attached to CF(0) by a central stalk formed by the gamma and epsilon chains, while a peripheral stalk is formed by the delta and b chains.

The protein resides in the cell inner membrane. The catalysed reaction is ATP + H2O + 4 H(+)(in) = ADP + phosphate + 5 H(+)(out). Produces ATP from ADP in the presence of a proton gradient across the membrane. The alpha chain is a regulatory subunit. This chain is ATP synthase subunit alpha, found in Pseudomonas putida (strain W619).